The sequence spans 158 residues: GTP-dependent dephospho-CoA kinase (158 aa).

GTP contacts are provided by aspartate 35, valine 36, aspartate 54, lysine 56, glutamate 109, and aspartate 132.

The protein belongs to the GTP-dependent DPCK family.

It carries out the reaction 3'-dephospho-CoA + GTP = GDP + CoA + H(+). Its pathway is cofactor biosynthesis; coenzyme A biosynthesis. Functionally, catalyzes the GTP-dependent phosphorylation of the 3'-hydroxyl group of dephosphocoenzyme A to form coenzyme A (CoA). The polypeptide is GTP-dependent dephospho-CoA kinase (Methanococcus maripaludis (strain DSM 14266 / JCM 13030 / NBRC 101832 / S2 / LL)).